Reading from the N-terminus, the 688-residue chain is Elongation factor G (688 aa).

Residues 8–282 (EKFRNFGIMA…GVVDYLPSPL (275 aa)) enclose the tr-type G domain. Residues 17–24 (AHIDAGKT), 81–85 (DTPGH), and 135–138 (NKMD) contribute to the GTP site.

The protein belongs to the TRAFAC class translation factor GTPase superfamily. Classic translation factor GTPase family. EF-G/EF-2 subfamily.

It localises to the cytoplasm. In terms of biological role, catalyzes the GTP-dependent ribosomal translocation step during translation elongation. During this step, the ribosome changes from the pre-translocational (PRE) to the post-translocational (POST) state as the newly formed A-site-bound peptidyl-tRNA and P-site-bound deacylated tRNA move to the P and E sites, respectively. Catalyzes the coordinated movement of the two tRNA molecules, the mRNA and conformational changes in the ribosome. In Clostridium perfringens (strain ATCC 13124 / DSM 756 / JCM 1290 / NCIMB 6125 / NCTC 8237 / Type A), this protein is Elongation factor G.